A 131-amino-acid polypeptide reads, in one-letter code: Phosphoribosyl-AMP cyclohydrolase (131 aa).

Asp89 provides a ligand contact to Mg(2+). Residue Cys90 coordinates Zn(2+). 2 residues coordinate Mg(2+): Asp91 and Asp93. Cys106 and Cys113 together coordinate Zn(2+).

This sequence belongs to the PRA-CH family. Homodimer. The cofactor is Mg(2+). Zn(2+) serves as cofactor.

The protein localises to the cytoplasm. The catalysed reaction is 1-(5-phospho-beta-D-ribosyl)-5'-AMP + H2O = 1-(5-phospho-beta-D-ribosyl)-5-[(5-phospho-beta-D-ribosylamino)methylideneamino]imidazole-4-carboxamide. It participates in amino-acid biosynthesis; L-histidine biosynthesis; L-histidine from 5-phospho-alpha-D-ribose 1-diphosphate: step 3/9. Its function is as follows. Catalyzes the hydrolysis of the adenine ring of phosphoribosyl-AMP. This chain is Phosphoribosyl-AMP cyclohydrolase, found in Pyrobaculum aerophilum (strain ATCC 51768 / DSM 7523 / JCM 9630 / CIP 104966 / NBRC 100827 / IM2).